Consider the following 92-residue polypeptide: C-C motif chemokine 4 (92 aa).

The first 23 residues, 1–23, serve as a signal peptide directing secretion; it reads MKLCVSAFSLLLLVAAFCDSVLS. Intrachain disulfides connect C34-C58 and C35-C74.

This sequence belongs to the intercrine beta (chemokine CC) family. Homodimer.

It is found in the secreted. Monokine with inflammatory and chemokinetic properties. This is C-C motif chemokine 4 (Ccl4) from Rattus norvegicus (Rat).